Consider the following 96-residue polypeptide: Xylulose kinase (96 aa).

71–72 (QH) is a binding site for substrate.

This sequence belongs to the FGGY kinase family.

It carries out the reaction D-xylulose + ATP = D-xylulose 5-phosphate + ADP + H(+). Catalyzes the phosphorylation of D-xylulose to D-xylulose 5-phosphate. The polypeptide is Xylulose kinase (Arthrobacter sp. (strain NRRL B3728)).